A 577-amino-acid polypeptide reads, in one-letter code: Proline--tRNA ligase (577 aa).

This sequence belongs to the class-II aminoacyl-tRNA synthetase family. ProS type 1 subfamily. Homodimer.

It is found in the cytoplasm. The catalysed reaction is tRNA(Pro) + L-proline + ATP = L-prolyl-tRNA(Pro) + AMP + diphosphate. In terms of biological role, catalyzes the attachment of proline to tRNA(Pro) in a two-step reaction: proline is first activated by ATP to form Pro-AMP and then transferred to the acceptor end of tRNA(Pro). As ProRS can inadvertently accommodate and process non-cognate amino acids such as alanine and cysteine, to avoid such errors it has two additional distinct editing activities against alanine. One activity is designated as 'pretransfer' editing and involves the tRNA(Pro)-independent hydrolysis of activated Ala-AMP. The other activity is designated 'posttransfer' editing and involves deacylation of mischarged Ala-tRNA(Pro). The misacylated Cys-tRNA(Pro) is not edited by ProRS. The polypeptide is Proline--tRNA ligase (Janthinobacterium sp. (strain Marseille) (Minibacterium massiliensis)).